The primary structure comprises 222 residues: Putative germin-like protein subfamily 1 member 9 (222 aa).

The N-terminal stretch at 1–22 is a signal peptide; sequence MKSFSFLAVLSILAITLSLSKA. The cysteines at positions 32 and 49 are disulfide-linked. The 151-residue stretch at 63 to 213 folds into the Cupin type-1 domain; it reads TGLHEARPPN…AFQVDPKIVM (151 aa). Asn-78 is a glycosylation site (N-linked (GlcNAc...) asparagine). Residues His-111, His-113, Glu-118, and His-159 each contribute to the Mn(2+) site.

This sequence belongs to the germin family. In terms of assembly, oligomer (believed to be a pentamer but probably hexamer).

It is found in the secreted. The protein localises to the extracellular space. The protein resides in the apoplast. Functionally, may play a role in plant defense. Probably has no oxalate oxidase activity even if the active site is conserved. This Arabidopsis thaliana (Mouse-ear cress) protein is Putative germin-like protein subfamily 1 member 9.